The chain runs to 616 residues: MYPLLENINSPADLRLLPRTQLPQLAGELREFLVESVSKTGGHFASNLGSIELTIALHYVFDTPHDRLVWDVGHQTYPHKILTGRRERMHTMRQHNGLAGFPKREESEYDTFGVGHSSTSIGAALGMAVAAKTLGVDRKSVAIIGDGAMTAGQAFEALNNAGAMDTDLLVILNDNDMSISPNVGALNNYLAKLMSGRFYAAMREGSSKVLGIAPPLKEIASKVEEHVKGFFTPGTLFEEFGFNYIGPIDGHDVDVLVDTLKNIRSLKGPQFLHIVTKKGQGYKLAENDPVKYHGVTKFDPANGLASGKGGAGKPQYTQVFGDWLCDMAKLDKRLVGITPAMREGSGMVRFEKEHPDRYYDVAIAEQHAVTFAGGMACDGLKPVVAIYSTFLQRGYDQLIHDVALQNLPVMFALDRAGLVGADGPTHAGAFDLSYLRCIPNMTVMAPSDENECRQLLYTAFQLDTPTAVRYPRGTGPGAEIQQQMAALPIGKGVVRRRGKQVAILAFGSMVHPALAAAEALDATVADMRFVKPLDAELIRKLAQTHELIVTVEENVVMGGAGSGCGEALQAMGLAVPTLHLGLPDDYVEHGDPALLLSLCGLDAAGIEKSIRERLAG.

Thiamine diphosphate is bound by residues H74 and 115–117 (GHS). D146 is a Mg(2+) binding site. Thiamine diphosphate-binding positions include 147 to 148 (GA), N175, Y282, and E365. N175 contacts Mg(2+).

This sequence belongs to the transketolase family. DXPS subfamily. Homodimer. Mg(2+) is required as a cofactor. The cofactor is thiamine diphosphate.

It carries out the reaction D-glyceraldehyde 3-phosphate + pyruvate + H(+) = 1-deoxy-D-xylulose 5-phosphate + CO2. Its pathway is metabolic intermediate biosynthesis; 1-deoxy-D-xylulose 5-phosphate biosynthesis; 1-deoxy-D-xylulose 5-phosphate from D-glyceraldehyde 3-phosphate and pyruvate: step 1/1. Catalyzes the acyloin condensation reaction between C atoms 2 and 3 of pyruvate and glyceraldehyde 3-phosphate to yield 1-deoxy-D-xylulose-5-phosphate (DXP). The sequence is that of 1-deoxy-D-xylulose-5-phosphate synthase from Chromobacterium violaceum (strain ATCC 12472 / DSM 30191 / JCM 1249 / CCUG 213 / NBRC 12614 / NCIMB 9131 / NCTC 9757 / MK).